We begin with the raw amino-acid sequence, 1181 residues long: Sodium/potassium/calcium exchanger 1 (1181 aa).

Over 1–419 the chain is Extracellular; sequence MGKLIRMGTQ…DLFSVEDRRQ (419 aa). Disordered stretches follow at residues 107-232, 255-276, and 300-323; these read AMED…TSLK, SLVGKNTLGSPRRGERNSSTTP, and STPATTEGSTAAQRIGNPLSGTST. The segment covering 124–136 has biased composition (polar residues); that stretch reads SLKNNYSPTTAGT. A glycan (N-linked (GlcNAc...) asparagine) is linked at Asn-271. A compositionally biased stretch (polar residues) spans 301-311; that stretch reads TPATTEGSTAA. The helical transmembrane segment at 420 to 440 threads the bilayer; it reads GWVVLHIFGMTYVFVALAIVC. The Cytoplasmic segment spans residues 441–464; that stretch reads DEYFVPALGVITDKLQISEDVAGA. An Alpha-1 repeat occupies 461–501; the sequence is VAGATFMAAGGSAPELFTSLIGVFISHSNVGIGTIVGSAVF. The chain crosses the membrane as a helical span at residues 465 to 485; the sequence is TFMAAGGSAPELFTSLIGVFI. Residues 486–491 lie on the Extracellular side of the membrane; that stretch reads SHSNVG. A helical membrane pass occupies residues 492-512; sequence IGTIVGSAVFNILFVIGTCAL. At 513–519 the chain is on the cytoplasmic side; that stretch reads FSREILN. Residues 520–544 form a helical membrane-spanning segment; the sequence is LTWWPLFRDVSFYILDLSMLIVFFL. Topologically, residues 545-552 are extracellular; sequence DSLIAWWE. A helical transmembrane segment spans residues 553-569; the sequence is SLLLLLAYALYVFTMKW. Topologically, residues 570–989 are cytoplasmic; the sequence is NKQIERWVKE…SLEWPESRQK (420 aa). Residues 598–617 form a disordered region; the sequence is PSDGAIEENEQQDNKKLKLP. A Phosphoserine modification is found at Ser-625. A disordered region spans residues 650-983; sequence GEARPSKDKQ…ESEEPLSLEW (334 aa). Position 690 is a phosphothreonine (Thr-690). The segment covering 701-715 has biased composition (acidic residues); that stretch reads GDQEEDPGCQEDVDE. 14 tandem repeats follow at residues 730-741, 742-754, 755-766, 767-778, 779-791, 792-804, 805-817, 818-830, 831-843, 844-856, 857-869, 870-881, 882-893, and 894-905. Composition is skewed to basic and acidic residues over residues 730–750, 757–775, and 782–805; these read ETEAEGKKDEEGETEAERKED, ETKGKEKQEGETESEGKDE, and AEGKEADHEGETEAEGKEVEHEGE. The segment at 730–905 is 14 X approximate tandem repeats; sequence ETEAEGKKDE…EAGEKDEHEG (176 aa). The span at 806–820 shows a compositional bias: acidic residues; it reads TEAEGTEDEQEGETE. Residues 834–906 are compositionally biased toward basic and acidic residues; the sequence is AEGKEVEHEV…AGEKDEHEGQ (73 aa). Acidic residues-rich tracts occupy residues 921–931 and 949–979; these read GEAEANAEDQC and GDSEEEEDEEDEEEEEEEEEEEEEEESEEPL. The helical transmembrane segment at 990–1010 threads the bilayer; sequence QAIYLFLLPIVFPLWLTIPDV. The Extracellular portion of the chain corresponds to 1011 to 1017; sequence RRQEARK. A helical membrane pass occupies residues 1018–1038; that stretch reads FFVITFLGSIIWIAMFSYLMV. The Cytoplasmic segment spans residues 1039–1053; that stretch reads WWAHQVGETIGISEE. Residues 1054-1074 traverse the membrane as a helical segment; that stretch reads IMGLTILAAGTSIPDLITSVI. The Alpha-2 repeat unit spans residues 1061-1092; that stretch reads AAGTSIPDLITSVIVARKGLGDMAVSSSVGSN. Over 1075–1092 the chain is Extracellular; the sequence is VARKGLGDMAVSSSVGSN. The helical transmembrane segment at 1093 to 1113 threads the bilayer; that stretch reads IFDITVGLPVPWLLFSLINAL. The Cytoplasmic portion of the chain corresponds to 1114-1121; the sequence is QPIPVSSN. Residues 1122–1142 traverse the membrane as a helical segment; the sequence is GLFCAIVLLFLMLLFVIFSIA. Residues 1143–1150 are Extracellular-facing; sequence SCKWRMNK. A helical membrane pass occupies residues 1151–1171; sequence ILGFTMFLLYFVFLVISVMLE. Topologically, residues 1172–1181 are cytoplasmic; that stretch reads DRIISCPVSV.

This sequence belongs to the Ca(2+):cation antiporter (CaCA) (TC 2.A.19) family. SLC24A subfamily. Post-translationally, the uncleaved signal sequence is required for efficient membrane targeting and proper membrane integration and topology. Highly expressed in the eye.

The protein localises to the cell membrane. The enzyme catalyses Ca(2+)(out) + K(+)(out) + 4 Na(+)(in) = Ca(2+)(in) + K(+)(in) + 4 Na(+)(out). Functionally, calcium, potassium:sodium antiporter that transports 1 Ca(2+) and 1 K(+) in exchange for 4 Na(+). Critical component of the visual transduction cascade, controlling the calcium concentration of outer segments during light and darkness. Light causes a rapid lowering of cytosolic free calcium in the outer segment of both retinal rod and cone photoreceptors and the light-induced lowering of calcium is caused by extrusion via this protein which plays a key role in the process of light adaptation. This is Sodium/potassium/calcium exchanger 1 (Slc24a1) from Rattus norvegicus (Rat).